The sequence spans 436 residues: GDP-mannose 6-dehydrogenase (436 aa).

The NAD(+) site is built by Tyr-10, Val-11, Asp-30, Lys-35, Thr-86, and Thr-124. Residues Glu-161, Lys-210, Asn-214, His-217, Asn-225, Tyr-256, Tyr-257, Arg-259, Phe-262, and Gly-265 each contribute to the GDP-alpha-D-mannuronate site. Residue Cys-268 is the Nucleophile of the active site. Residue Lys-271 participates in NAD(+) binding. Residues 278–295 (YRASQLDVEHPMLGSLMR) are inter-domain linker. Lys-324 lines the GDP-alpha-D-mannuronate pocket. Arg-331 serves as a coordination point for NAD(+).

Belongs to the UDP-glucose/GDP-mannose dehydrogenase family. As to quaternary structure, forms a domain-swapped dimer with each peptide contributing to each active site. The dimers assemble further. X-ray structures indicate this enzyme exists as a homotetramer PubMed:12705829, but kinetic and physical results obtained in PubMed:2470755 and PubMed:12135385 indicate that it is probably a homohexamer.

The catalysed reaction is GDP-alpha-D-mannose + 2 NAD(+) + H2O = GDP-alpha-D-mannuronate + 2 NADH + 3 H(+). Its pathway is glycan biosynthesis; alginate biosynthesis. With respect to regulation, inhibited by GMP, ATP, GDP-D-glucose and maltose. Inhibited by GMP and deamidoNAD. Catalyzes the oxidation of guanosine diphospho-D-mannose (GDP-D-mannose) to GDP-D-mannuronic acid, a precursor for alginate polymerization. The alginate layer causes a mucoid phenotype and provides a protective barrier against host immune defenses and antibiotics. Other sugars are not used as substrates. The chain is GDP-mannose 6-dehydrogenase from Pseudomonas aeruginosa (strain ATCC 15692 / DSM 22644 / CIP 104116 / JCM 14847 / LMG 12228 / 1C / PRS 101 / PAO1).